We begin with the raw amino-acid sequence, 259 residues long: MIFPNINPVIFSIGPFAISWYSLSYVIGILLGWFYANKIIEKFKPQITKKNLEDFITYAVIGIIVGGRLGFVLLYNPSRYFSNPIDILKTYQGGMSFHGGALGVIIAAYLFCRKYKVNFLSLTDIIATVVPIGLFLGRIANFINGELYGRITNSSFGIIFPNSDLSPRHPSQLYEAFFEGLVLFCILAYATFKHKTLEKRALNLGLFLTFYALFRITIEIFREPDMQIGFILDSLTMGQILSIPMLILGSSLICQSTLK.

A run of 4 helical transmembrane segments spans residues 16-36 (FAIS…WFYA), 55-75 (FITY…VLLY), 92-112 (QGGM…YLFC), and 117-137 (VNFL…LFLG). Arg138 contacts a 1,2-diacyl-sn-glycero-3-phospho-(1'-sn-glycerol). 3 helical membrane-spanning segments follow: residues 172-192 (QLYE…YATF), 201-221 (ALNL…IEIF), and 228-248 (IGFI…MLIL).

It belongs to the Lgt family.

Its subcellular location is the cell inner membrane. The enzyme catalyses L-cysteinyl-[prolipoprotein] + a 1,2-diacyl-sn-glycero-3-phospho-(1'-sn-glycerol) = an S-1,2-diacyl-sn-glyceryl-L-cysteinyl-[prolipoprotein] + sn-glycerol 1-phosphate + H(+). Its pathway is protein modification; lipoprotein biosynthesis (diacylglyceryl transfer). Functionally, catalyzes the transfer of the diacylglyceryl group from phosphatidylglycerol to the sulfhydryl group of the N-terminal cysteine of a prolipoprotein, the first step in the formation of mature lipoproteins. The polypeptide is Phosphatidylglycerol--prolipoprotein diacylglyceryl transferase (Rickettsia canadensis (strain McKiel)).